The following is a 583-amino-acid chain: Selenocysteine-specific elongation factor (583 aa).

One can recognise a tr-type G domain in the interval 5 to 203 (RVNVNVGVLG…LLKSQISIPT (199 aa)). Positions 14 to 21 (GHIDSGKT) are G1. 3 residues coordinate GTP: G19, T21, and A22. T21 provides a ligand contact to Mg(2+). A G2 region spans residues 46 to 50 (GITLD). 2 residues coordinate Mg(2+): T48 and D78. Positions 78–81 (DCPG) are G3. The segment at 132–135 (NKID) is G4. GTP-binding residues include D135 and K173. Positions 171–173 (AAK) are G5. The segment at 371-390 (MPTATEGDDEADPKAGHAPG) is disordered. S524 bears the Phosphoserine mark. The disordered stretch occupies residues 528–562 (KKILTPTLKKRSRAGRGETTKPEEGTERPEPIQPV). T532 is subject to Phosphothreonine. The short motif at 534–540 (TLKKRSR) is the Nuclear localization signal element. Residues 542–557 (GRGETTKPEEGTERPE) show a composition bias toward basic and acidic residues. Residue R543 is modified to Omega-N-methylarginine.

Belongs to the TRAFAC class translation factor GTPase superfamily. Classic translation factor GTPase family. SelB subfamily. The cofactor is Mg(2+). Mn(2+) is required as a cofactor.

It localises to the cytoplasm. The protein localises to the nucleus. The catalysed reaction is GTP + H2O = GDP + phosphate + H(+). Translation factor required for the incorporation of the rare amino acid selenocysteine encoded by UGA codons. Replaces the eRF1-eRF3-GTP ternary complex for the insertion of selenocysteine directed by the UGA codon. Insertion of selenocysteine at UGA codons is mediated by SECISBP2 and EEFSEC: SECISBP2 (1) specifically binds the SECIS sequence once the 80S ribosome encounters an in-frame UGA codon and (2) contacts the RPS27A/eS31 of the 40S ribosome before ribosome stalling. (3) GTP-bound EEFSEC then delivers selenocysteinyl-tRNA(Sec) to the 80S ribosome and adopts a preaccommodated state conformation. (4) After GTP hydrolysis, EEFSEC dissociates from the assembly, selenocysteinyl-tRNA(Sec) accommodates, and peptide bond synthesis and selenoprotein elongation occur. In Mus musculus (Mouse), this protein is Selenocysteine-specific elongation factor (Eefsec).